Here is a 1168-residue protein sequence, read N- to C-terminus: Homeodomain-interacting protein kinase 2 (1168 aa).

Phosphoserine is present on Ser-16. Lys-32 is covalently cross-linked (Glycyl lysine isopeptide (Lys-Gly) (interchain with G-Cter in SUMO); alternate). A Glycyl lysine isopeptide (Lys-Gly) (interchain with G-Cter in SUMO2); alternate cross-link involves residue Lys-32. The segment at 97–230 is transcriptional corepression; sequence SASSTSVTGQ…TNEIVAIKIL (134 aa). Ser-118 and Ser-135 each carry phosphoserine. Residue Thr-141 is modified to Phosphothreonine. Residues 189–520 form an interaction with DAXX region; it reads HEVLCSMTNT…DADKRITPIE (332 aa). Residues 199 to 527 form the Protein kinase domain; that stretch reads YEVLEFLGRG…PIETLNHPFV (329 aa). Residues 205 to 213 and Lys-228 each bind ATP; that span reads LGRGTFGQV. Phosphothreonine is present on residues Thr-252 and Thr-273. The Proton acceptor role is filled by Asp-324. Tyr-361 carries the post-translational modification Phosphotyrosine. Residue Ser-441 is modified to Phosphoserine. Phosphothreonine is present on residues Thr-482, Thr-517, and Thr-566. The interval 539 to 816 is interaction with SKI and SMAD1; sequence THVKSCFQNM…KENTPPRCAM (278 aa). An interaction with DAZAP2 region spans residues 595 to 772; it reads PSAASMAAVA…MRQQPTSTTS (178 aa). Phosphoserine occurs at positions 607 and 641. Thr-660 bears the Phosphothreonine mark. An interaction with POU4F1 region spans residues 724 to 869; it reads RNTHAHGSHY…ITISSDTDEE (146 aa). The segment at 746–848 is interaction with CTBP1; it reads HVTLPAAQPL…TRERQRQTIV (103 aa). The interval 759 to 869 is interaction with HMGA1; it reads VAHVMRQQPT…ITISSDTDEE (111 aa). The segment at 764-820 is disordered; it reads RQQPTSTTSSRKSKQHQPSMRNVSTCEVTSSQSTSSPQRSKRVKENTPPRCAMVHSS. Over residues 765-791 the composition is skewed to polar residues; it reads QQPTSTTSSRKSKQHQPSMRNVSTCEV. Positions 774-777 match the Nuclear localization signal 1 (NLS1) motif; the sequence is RKSK. Phosphoserine is present on residues Ser-787 and Ser-799. Residues 792–801 are compositionally biased toward low complexity; sequence TSSQSTSSPQ. A Nuclear localization signal 2 (NLS2) motif is present at residues 804 to 807; that stretch reads KRVK. An interaction with TP53 and TP73 region spans residues 812–907; it reads PRCAMVHSSP…YSDSSSNTSP (96 aa). Residues 845–879 form an interaction with UBE2I region; sequence QTIVIPDTPSPTVSVITISSDTDEEEEQKHAPTST. A localization to nuclear speckles region spans residues 845 to 952; it reads QTIVIPDTPS…PLKTQASEVL (108 aa). The tract at residues 845–952 is required for localization to nuclear speckles; that stretch reads QTIVIPDTPS…PLKTQASEVL (108 aa). The interaction with UBL1 stretch occupies residues 854–876; sequence SPTVSVITISSDTDEEEEQKHAP. Positions 856–880 are SUMO interaction motifs (SIM); required for nuclear localization and kinase activity; sequence TVSVITISSDTDEEEEQKHAPTSTV. The disordered stretch occupies residues 894-936; sequence HDSPYSDSSSNTSPYSVQQRTGHNGTNTLDTKGALENHCTGNP. Positions 895-909 are enriched in low complexity; it reads DSPYSDSSSNTSPYS. Ser-906 is modified (phosphoserine). Positions 907–1022 are interaction with AXIN1; sequence PYSVQQRTGH…LSQAQPHMAT (116 aa). Polar residues predominate over residues 910–923; that stretch reads VQQRTGHNGTNTLD. Residues Lys-925 and Lys-945 each participate in a glycyl lysine isopeptide (Lys-Gly) (interchain with G-Cter in SUMO2) cross-link. The segment at 956-1168 is autoinhibitory domain (AID); the sequence is DSLGPAVSTG…PAKVNQYPYI (213 aa). The interval 960-1030 is disordered; it reads PAVSTGHHSS…ATDRTGSHRR (71 aa). A Phosphoserine modification is found at Ser-963. Low complexity-rich tracts occupy residues 965-991 and 998-1018; these read GHHSSSFKCKSSSTVTSTSGHSSGSSS and QQRPGPHFQQQQPLNLSQAQP. Ser-1014, Ser-1125, and Ser-1158 each carry phosphoserine. Lys-1161 is covalently cross-linked (Glycyl lysine isopeptide (Lys-Gly) (interchain with G-Cter in SUMO)).

This sequence belongs to the protein kinase superfamily. CMGC Ser/Thr protein kinase family. HIPK subfamily. In terms of assembly, interacts with CREB1, SIAH1, WSB1, CBX4, TRADD, p53/TP53, TP73, TP63, CREBBP, DAXX, P53DINP1, SKI, SMAD1, SMAD2 and SMAD3, but not SMAD4. Interacts with ATF1, PML, RUNX1, EP300, NKX1-2, NKX2-5, UBE2I, HMGA1, CTBP1, AXIN1, NLK, MYB, POU4F1, POU4F2, POU4F3, UBE2I, UBL1 and ZBTB4. Probably part of a complex consisting of p53/TP53, HIPK2 and AXIN1. Interacts with SP100; positively regulates TP53-dependent transcription. Interacts with DAZAP2; the interaction results in phosphorylation of DAZAP2 which causes localization of DAZAP2 to the nucleus, reduces interaction of DAZAP2 with HIPK2 and prevents DAZAP2-dependent degradation of HIPK2. Interacts with SIAH1; the interaction is promoted by DAZAP2 and results in SIAH1-mediated ubiquitination and subsequent proteasomal degradation of HIPK2. Post-translationally, autophosphorylation at Tyr-361 in the activation loop activates the kinase and promotes nuclear localization. In terms of processing, sumoylated. When conjugated it is directed to nuclear speckles. Desumoylated by SENP1. Sumoylation on Lys-32 is promoted by the E3 SUMO-protein ligase CBX4. Ubiquitinated by FBXO3, WSB1 and SIAH1, leading to rapid proteasome-dependent degradation. The degradation mediated by FBXO3, but not ubiquitination, is prevented in the presence of PML. The degradation mediated by WSB1 and SIAH1 is reversibly reduced upon DNA damage. Post-translationally, cleaved at Asp-895 and Asp-956 by CASP6 in a p53/TP53-dependent manner. The cleaved form lacks the autoinhibitory C-terminal domain (AID), resulting in a hyperactive kinase, which potentiates p53/TP53 Ser-46 phosphorylation and subsequent activation of the cell death machinery.

Its subcellular location is the nucleus. It localises to the PML body. The protein resides in the cytoplasm. It carries out the reaction L-seryl-[protein] + ATP = O-phospho-L-seryl-[protein] + ADP + H(+). The enzyme catalyses L-threonyl-[protein] + ATP = O-phospho-L-threonyl-[protein] + ADP + H(+). Its function is as follows. Serine/threonine-protein kinase involved in transcription regulation, p53/TP53-mediated cellular apoptosis and regulation of the cell cycle. Acts as a corepressor of several transcription factors, including SMAD1 and POU4F1/Brn3a and probably NK homeodomain transcription factors. Phosphorylates PDX1, ATF1, PML, p53/TP53, CREB1, CTBP1, CBX4, RUNX1, EP300, CTNNB1, HMGA1, ZBTB4 and DAZAP2. Inhibits cell growth and promotes apoptosis through the activation of p53/TP53 both at the transcription level and at the protein level (by phosphorylation and indirect acetylation). The phosphorylation of p53/TP53 may be mediated by a p53/TP53-HIPK2-AXIN1 complex. Involved in the response to hypoxia by acting as a transcriptional co-suppressor of HIF1A. Mediates transcriptional activation of TP73. In response to TGFB, cooperates with DAXX to activate JNK. Negative regulator through phosphorylation and subsequent proteasomal degradation of CTNNB1 and the antiapoptotic factor CTBP1. In the Wnt/beta-catenin signaling pathway acts as an intermediate kinase between MAP3K7/TAK1 and NLK to promote the proteasomal degradation of MYB. Phosphorylates CBX4 upon DNA damage and promotes its E3 SUMO-protein ligase activity. Activates CREB1 and ATF1 transcription factors by phosphorylation in response to genotoxic stress. In response to DNA damage, stabilizes PML by phosphorylation. PML, HIPK2 and FBXO3 may act synergically to activate p53/TP53-dependent transactivation. Promotes angiogenesis, and is involved in erythroid differentiation, especially during fetal liver erythropoiesis. Phosphorylation of RUNX1 and EP300 stimulates EP300 transcription regulation activity. Triggers ZBTB4 protein degradation in response to DNA damage. In response to DNA damage, phosphorylates DAZAP2 which localizes DAZAP2 to the nucleus, reduces interaction of DAZAP2 with HIPK2 and prevents DAZAP2-dependent ubiquitination of HIPK2 by E3 ubiquitin-protein ligase SIAH1 and subsequent proteasomal degradation. Modulates HMGA1 DNA-binding affinity. In response to high glucose, triggers phosphorylation-mediated subnuclear localization shifting of PDX1. Involved in the regulation of eye size, lens formation and retinal lamination during late embryogenesis. The polypeptide is Homeodomain-interacting protein kinase 2 (Hipk2) (Mesocricetus auratus (Golden hamster)).